Reading from the N-terminus, the 212-residue chain is MITIAKDLKVNEQIRVRQVRLIGAEGEQIGIIDTREAMNMAREKSLDLVMVSPQAVPPVCRLLDYGRFRYEQQQNEKENRKRARSQEVKAIKFRVKIDDNDFKTKTGHVRRFLNEGHKVKVTIMFRGRERTHPELGERILVRVAETLADVGAPEGNPSMMGMDMNMIMAPKAPASPKKDKADRPEGDAGDTDMAAPAPAPAAAPETESAPSA.

The disordered stretch occupies residues 168–212 (MAPKAPASPKKDKADRPEGDAGDTDMAAPAPAPAAAPETESAPSA). Over residues 176–186 (PKKDKADRPEG) the composition is skewed to basic and acidic residues. Residues 194 to 212 (AAPAPAPAAAPETESAPSA) show a composition bias toward low complexity.

The protein belongs to the IF-3 family. In terms of assembly, monomer.

It localises to the cytoplasm. Functionally, IF-3 binds to the 30S ribosomal subunit and shifts the equilibrium between 70S ribosomes and their 50S and 30S subunits in favor of the free subunits, thus enhancing the availability of 30S subunits on which protein synthesis initiation begins. This is Translation initiation factor IF-3 from Deinococcus radiodurans (strain ATCC 13939 / DSM 20539 / JCM 16871 / CCUG 27074 / LMG 4051 / NBRC 15346 / NCIMB 9279 / VKM B-1422 / R1).